The primary structure comprises 659 residues: Envelope glycoprotein (659 aa).

An N-terminal signal peptide occupies residues 1-35; sequence MLLISNPRHLGHPMSPGNWKRLIILLSCVFGGAEM. Residues 36-606 lie on the Extracellular side of the membrane; that stretch reads NQQHNNPHQP…NRSPWLTTLL (571 aa). 2 disulfide bridges follow: Cys-141–Cys-162 and Cys-154–Cys-167. Residues 278 to 301 form a disordered region; the sequence is LSPPASPIPTVQASPPAPSTPSPT. Asn-318 carries N-linked (GlcNAc...) asparagine; by host glycosylation. Intrachain disulfides connect Cys-328-Cys-331, Cys-328-Cys-558, and Cys-550-Cys-557. Residues 328 to 331 carry the CXXC motif; it reads CWLC. N-linked (GlcNAc...) asparagine; by host glycans are attached at residues Asn-389, Asn-395, Asn-407, and Asn-427. The fusion peptide stretch occupies residues 466 to 486; sequence VSLTLAVLLGLGVAAGIGTGS. A coiled-coil region spans residues 506–532; it reads AMDTDLRALQDSISKLEDSLTSLSEVV. The segment at 533-549 is immunosuppression; sequence LQNRRGLDLLFLKEGGL. Positions 550-558 match the CX6CC motif; that stretch reads CAALKEECC. A coiled-coil region spans residues 567 to 587; it reads VRDSMRRLKERLDKRQLEHQK. Residues 607-627 form a helical membrane-spanning segment; that stretch reads SALAGPLLLLLLLLTLGPCVI. Cys-625 is lipidated: S-palmitoyl cysteine; by host. Residues 628–659 are Cytoplasmic-facing; sequence NKLVQFINDRVSAVRILVLRHKYQTLDNEDNL. The YXXL motif; contains endocytosis signal motif lies at 650–653; sequence YQTL.

The mature envelope protein (Env) consists of a trimer of SU-TM heterodimers attached by a labile interchain disulfide bond. In terms of processing, specific enzymatic cleavages in vivo yield mature proteins. Envelope glycoproteins are synthesized as an inactive precursor that is N-glycosylated and processed likely by host cell furin or by a furin-like protease in the Golgi to yield the mature SU and TM proteins. The cleavage site between SU and TM requires the minimal sequence [KR]-X-[KR]-R. The R-peptide is released from the C-terminus of the cytoplasmic tail of the TM protein upon particle formation as a result of proteolytic cleavage by the viral protease. Cleavage of this peptide is required for TM to become fusogenic. Post-translationally, the CXXC motif is highly conserved across a broad range of retroviral envelope proteins. It is thought to participate in the formation of a labile disulfide bond possibly with the CX6CC motif present in the transmembrane protein. Isomerization of the intersubunit disulfide bond to an SU intrachain disulfide bond is thought to occur upon receptor recognition in order to allow membrane fusion. The transmembrane protein is palmitoylated. In terms of processing, the R-peptide is palmitoylated.

Its subcellular location is the virion membrane. It is found in the host cell membrane. Functionally, the surface protein (SU) attaches the virus to the host cell by binding to its receptor. This interaction triggers the refolding of the transmembrane protein (TM) and is thought to activate its fusogenic potential by unmasking its fusion peptide. Fusion occurs at the host cell plasma membrane. In terms of biological role, the transmembrane protein (TM) acts as a class I viral fusion protein. Under the current model, the protein has at least 3 conformational states: pre-fusion native state, pre-hairpin intermediate state, and post-fusion hairpin state. During viral and target cell membrane fusion, the coiled coil regions (heptad repeats) assume a trimer-of-hairpins structure, positioning the fusion peptide in close proximity to the C-terminal region of the ectodomain. The formation of this structure appears to drive apposition and subsequent fusion of viral and target cell membranes. Membranes fusion leads to delivery of the nucleocapsid into the cytoplasm. In Phascolarctos cinereus (Koala), this protein is Envelope glycoprotein (env).